A 669-amino-acid polypeptide reads, in one-letter code: PDF receptor (669 aa).

Residues 1–244 are Extracellular-facing; it reads MTLLSNILDC…DIARRTRTLE (244 aa). The interval 24 to 52 is disordered; sequence RQSGSSGPSPSAPTAGTFESKSMLEPTSS. Positions 26-40 are enriched in low complexity; the sequence is SGSSGPSPSAPTAGT. Residues Asn-111, Asn-117, Asn-130, Asn-137, Asn-148, and Asn-198 are each glycosylated (N-linked (GlcNAc...) asparagine). Residues 245–265 traverse the membrane as a helical segment; that stretch reads IVGLCLSLFALIVSLLIFCTF. Over 266-274 the chain is Cytoplasmic; sequence RSLRNNRTK. Residues 275-295 traverse the membrane as a helical segment; sequence IHKNLFVAMVLQVIIRLTLYL. The Extracellular portion of the chain corresponds to 296–334; sequence DQFRRGNKEAATNTSLSVIENTPYLCEASYVLLEYARTA. N-linked (GlcNAc...) asparagine glycosylation is present at Asn-308. A helical membrane pass occupies residues 335-355; that stretch reads MFMWMFIEGLYLHNMVTVAVF. At 356–366 the chain is on the cytoplasmic side; it reads QGSFPLKFFSR. The chain crosses the membrane as a helical span at residues 367–387; sequence LGWCVPILMTTVWARCTVMYM. Residues 388 to 411 lie on the Extracellular side of the membrane; it reads DTSLGECLWNYNLTPYYWILEGPR. A helical transmembrane segment spans residues 412 to 432; that stretch reads LAVILLNFCFLVNIIRVLVMK. Topologically, residues 433-449 are cytoplasmic; sequence LRQSQASDIEQTRKAVR. Residues 450–470 form a helical membrane-spanning segment; that stretch reads AAIVLLPLLGITNLLHQLAPL. Over 471–480 the chain is Extracellular; sequence KTATNFAVWS. A helical transmembrane segment spans residues 481-501; that stretch reads YGTHFLTSFQGFFIALIYCFL. At 502–669 the chain is on the cytoplasmic side; the sequence is NGEVRAVLLK…ESVVFELSEQ (168 aa). Disordered regions lie at residues 536–573 and 590–614; these read AYNT…KPSS and PRLQ…AEPD. Positions 595–609 are enriched in basic and acidic residues; the sequence is KAREKGKDRVEKTDA.

The protein belongs to the G-protein coupled receptor 2 family. As to expression, mainly present in clock neurons of the brain. Localizes in all 4 s-LNv neurons, 1 LNd neuron, 7 DN1 neurons, and 1 DN3 neuron. In addition to the clock neurons, it is also present in approximately 13 pairs of neurons along the ventral nerve cord in third instar larvae, which do not overlap with dopaminergic or serotonergic neurons. Not present in DN2 neurons (at protein level).

The protein localises to the cell membrane. Its function is as follows. Receptor for PDF, a neuropeptide controlling circadian behavioral rhythms. Probably regulates circadian behavioral rhythms through coordination of activities of clock neurons. PDF-binding results in the elevation of cAMP synthesis. Plays a role in sleep regulation and regulates the state transition from sleep to wake. This chain is PDF receptor, found in Drosophila melanogaster (Fruit fly).